Consider the following 275-residue polypeptide: 4-hydroxy-tetrahydrodipicolinate reductase (275 aa).

NAD(+) contacts are provided by residues 13-18 (GAAGKM) and 108-110 (GTT). The Proton donor/acceptor role is filled by H164. H165 contributes to the (S)-2,3,4,5-tetrahydrodipicolinate binding site. K168 serves as the catalytic Proton donor. 174-175 (GT) contributes to the (S)-2,3,4,5-tetrahydrodipicolinate binding site.

This sequence belongs to the DapB family.

The protein resides in the cytoplasm. The enzyme catalyses (S)-2,3,4,5-tetrahydrodipicolinate + NAD(+) + H2O = (2S,4S)-4-hydroxy-2,3,4,5-tetrahydrodipicolinate + NADH + H(+). The catalysed reaction is (S)-2,3,4,5-tetrahydrodipicolinate + NADP(+) + H2O = (2S,4S)-4-hydroxy-2,3,4,5-tetrahydrodipicolinate + NADPH + H(+). It participates in amino-acid biosynthesis; L-lysine biosynthesis via DAP pathway; (S)-tetrahydrodipicolinate from L-aspartate: step 4/4. In terms of biological role, catalyzes the conversion of 4-hydroxy-tetrahydrodipicolinate (HTPA) to tetrahydrodipicolinate. The chain is 4-hydroxy-tetrahydrodipicolinate reductase from Cyanothece sp. (strain PCC 7425 / ATCC 29141).